We begin with the raw amino-acid sequence, 106 residues long: Immunity protein CdiI (106 aa).

In terms of assembly, forms a contact-dependent growth inhibition complex of CdiA-CT-NC101, CdiI-NC101 and EF-Tu; the complex is a dimer of heterotrimers.

Immunity protein component of a toxin-immunity protein module, which functions as a cellular contact-dependent growth inhibition (CDI) system. CDI modules allow bacteria to communicate with and inhibit the growth of closely related neighboring bacteria in a contact-dependent fashion. Neutralizes the toxic activity of cognate toxin CdiA-NC101 (the C-terminal 154 residue CT fragment). Does not inhibit toxic activity of CdiA from other toxin-immunity modules or strains of E.coli. Mediates dimerization of the ternary CdiA-CT-NC101, CdiI-NC101 and EF-Tu complex; both CdiI molecules contact both EF-Tu molecules. This Escherichia coli (strain NC101) protein is Immunity protein CdiI.